Here is a 465-residue protein sequence, read N- to C-terminus: MESLRIYNTLARDKQDFVPRQPGEVRMYVCGITVYDYCHIGHARMVVVFDIVQRWLRARGYRVTYVRNITDIDDKIIRRAVENGETIQSLTRRFTDAMNADFDALGVERPDLEPRATEFIPQMLGMIEKLEANGYAYQAKDGDVNYSVRKFANYGRLSGKSLEDLRAGERVAANDAKEDPLDFVLWKRAKPQEPAGASWESKYGAGRPGWHIECSAMGCTLLGAHFDIHGGGQDLQFPHHENEIAQSEGATGQTFVNYWMHNGFVQVDSEKMSKSLGNFFTIREVLEKFDAEVVRFFIVRTHYRSPLNYSDVHLDDARASLTRLYTALKDATPDAQPLDWSEAHAQRFAAAMNDDFNTAVAVAVLFELATEVNRTREPALARQLRLLAGLLGLLGREPREFLQHAAGAARTGALEPHEIEARIAARVAAKQAKNYAEADRIRAELLEAGIALEDKPGGSTEWRRV.

Cys-30 is a binding site for Zn(2+). A 'HIGH' region motif is present at residues Ile-32–His-42. 3 residues coordinate Zn(2+): Cys-214, His-239, and Glu-243. Positions Lys-271–Ser-275 match the 'KMSKS' region motif. Position 274 (Lys-274) interacts with ATP.

The protein belongs to the class-I aminoacyl-tRNA synthetase family. In terms of assembly, monomer. It depends on Zn(2+) as a cofactor.

Its subcellular location is the cytoplasm. It carries out the reaction tRNA(Cys) + L-cysteine + ATP = L-cysteinyl-tRNA(Cys) + AMP + diphosphate. The sequence is that of Cysteine--tRNA ligase from Burkholderia mallei (strain NCTC 10229).